Reading from the N-terminus, the 315-residue chain is B3 domain-containing protein At1g05920 (315 aa).

The segment at 24–129 (MISRDNQKKT…PQVASVPKSV (106 aa)) is disordered. 3 stretches are compositionally biased toward basic and acidic residues: residues 39–51 (VREE…EEMI), 66–83 (KEGK…DNRT), and 100–114 (FDHV…HAYL). Residues 204–306 (INTVIQNDFL…ILCFALVPPT (103 aa)) constitute a DNA-binding region (TF-B3).

Its subcellular location is the nucleus. The sequence is that of B3 domain-containing protein At1g05920 from Arabidopsis thaliana (Mouse-ear cress).